We begin with the raw amino-acid sequence, 503 residues long: Probable cytosol aminopeptidase (503 aa).

Positions 270 and 275 each coordinate Mn(2+). Residue Lys-282 is part of the active site. The Mn(2+) site is built by Asp-293, Asp-352, and Glu-354. The active site involves Arg-356.

It belongs to the peptidase M17 family. Mn(2+) serves as cofactor.

It localises to the cytoplasm. The catalysed reaction is Release of an N-terminal amino acid, Xaa-|-Yaa-, in which Xaa is preferably Leu, but may be other amino acids including Pro although not Arg or Lys, and Yaa may be Pro. Amino acid amides and methyl esters are also readily hydrolyzed, but rates on arylamides are exceedingly low.. The enzyme catalyses Release of an N-terminal amino acid, preferentially leucine, but not glutamic or aspartic acids.. Functionally, presumably involved in the processing and regular turnover of intracellular proteins. Catalyzes the removal of unsubstituted N-terminal amino acids from various peptides. The protein is Probable cytosol aminopeptidase of Sodalis glossinidius (strain morsitans).